The chain runs to 662 residues: UvrABC system protein B (662 aa).

A Helicase ATP-binding domain is found at 31-188 (DNIEGGEKAQ…NDLVDIQFER (158 aa)). Residue 44-51 (GATGTGKT) coordinates ATP. The Beta-hairpin motif lies at 97–120 (YYDYYQPEAYVPSSDTYIEKDSSV). One can recognise a Helicase C-terminal domain in the interval 435-601 (QIDDLLGEIN…TIKKEIRDLI (167 aa)). A UVR domain is found at 626–661 (KELVKKLEKQMQEAVEVLDFELAAQIRDMMLEVKAL).

The protein belongs to the UvrB family. In terms of assembly, forms a heterotetramer with UvrA during the search for lesions. Interacts with UvrC in an incision complex.

The protein resides in the cytoplasm. In terms of biological role, the UvrABC repair system catalyzes the recognition and processing of DNA lesions. A damage recognition complex composed of 2 UvrA and 2 UvrB subunits scans DNA for abnormalities. Upon binding of the UvrA(2)B(2) complex to a putative damaged site, the DNA wraps around one UvrB monomer. DNA wrap is dependent on ATP binding by UvrB and probably causes local melting of the DNA helix, facilitating insertion of UvrB beta-hairpin between the DNA strands. Then UvrB probes one DNA strand for the presence of a lesion. If a lesion is found the UvrA subunits dissociate and the UvrB-DNA preincision complex is formed. This complex is subsequently bound by UvrC and the second UvrB is released. If no lesion is found, the DNA wraps around the other UvrB subunit that will check the other stand for damage. The polypeptide is UvrABC system protein B (Streptococcus pneumoniae (strain Taiwan19F-14)).